We begin with the raw amino-acid sequence, 410 residues long: Peptidase T (410 aa).

Histidine 79 contacts Zn(2+). Residue aspartate 81 is part of the active site. A Zn(2+)-binding site is contributed by aspartate 142. Glutamate 176 serves as the catalytic Proton acceptor. Zn(2+)-binding residues include glutamate 177, aspartate 199, and histidine 381.

Belongs to the peptidase M20B family. Requires Zn(2+) as cofactor.

It is found in the cytoplasm. It carries out the reaction Release of the N-terminal residue from a tripeptide.. In terms of biological role, cleaves the N-terminal amino acid of tripeptides. The polypeptide is Peptidase T (Bacillus licheniformis (strain ATCC 14580 / DSM 13 / JCM 2505 / CCUG 7422 / NBRC 12200 / NCIMB 9375 / NCTC 10341 / NRRL NRS-1264 / Gibson 46)).